Here is a 378-residue protein sequence, read N- to C-terminus: Protein RecA (378 aa).

Gly-79 to Thr-86 contributes to the ATP binding site.

It belongs to the RecA family.

It localises to the cytoplasm. In terms of biological role, can catalyze the hydrolysis of ATP in the presence of single-stranded DNA, the ATP-dependent uptake of single-stranded DNA by duplex DNA, and the ATP-dependent hybridization of homologous single-stranded DNAs. It interacts with LexA causing its activation and leading to its autocatalytic cleavage. The protein is Protein RecA of Streptococcus pyogenes serotype M49 (strain NZ131).